A 210-amino-acid polypeptide reads, in one-letter code: Methylthioribulose-1-phosphate dehydratase (210 aa).

Positions 94 and 96 each coordinate Zn(2+).

This sequence belongs to the aldolase class II family. MtnB subfamily. Requires Zn(2+) as cofactor.

It catalyses the reaction 5-(methylsulfanyl)-D-ribulose 1-phosphate = 5-methylsulfanyl-2,3-dioxopentyl phosphate + H2O. Its pathway is amino-acid biosynthesis; L-methionine biosynthesis via salvage pathway; L-methionine from S-methyl-5-thio-alpha-D-ribose 1-phosphate: step 2/6. Its function is as follows. Catalyzes the dehydration of methylthioribulose-1-phosphate (MTRu-1-P) into 2,3-diketo-5-methylthiopentyl-1-phosphate (DK-MTP-1-P). The chain is Methylthioribulose-1-phosphate dehydratase from Yersinia enterocolitica serotype O:8 / biotype 1B (strain NCTC 13174 / 8081).